We begin with the raw amino-acid sequence, 294 residues long: MSEKIRKTLSLIESQQLAQDVWHILQEQHFKGMLPYFTVEHLCTKHQLTPQQLALKLLPIAAAYSLAPISQFHVGAIAIGQRGAYYFGANLEFASTHIQQTVHAEQSAISHAWMNHESAITDVVVNYTPCGHCRQFMNELKTAPQLKIHLPHSQNNLLHSYLPDAFGPADLDIQHFLLDAQNNQLTYETQDPVMLTALECANAAHAPYSKSYHGIAIETKDKQIYRGSYAENAAFNPSLPALQVALNHLLLSGDTLQNIQRIVMIEKANHLCYRHMAEDLVANLVDIPLDYIAL.

CMP/dCMP-type deaminase domains are found at residues 49 to 169 (TPQQ…FGPA) and 188 to 294 (ETQD…YIAL). Residue 90-92 (NLE) coordinates substrate. Residue histidine 103 participates in Zn(2+) binding. Glutamate 105 acts as the Proton donor in catalysis. Residues cysteine 130 and cysteine 133 each contribute to the Zn(2+) site.

It belongs to the cytidine and deoxycytidylate deaminase family. As to quaternary structure, homodimer. The cofactor is Zn(2+).

The enzyme catalyses cytidine + H2O + H(+) = uridine + NH4(+). It carries out the reaction 2'-deoxycytidine + H2O + H(+) = 2'-deoxyuridine + NH4(+). Functionally, this enzyme scavenges exogenous and endogenous cytidine and 2'-deoxycytidine for UMP synthesis. This chain is Cytidine deaminase, found in Pasteurella multocida (strain Pm70).